The chain runs to 111 residues: Small ribosomal subunit protein uS17 (111 aa).

The protein belongs to the universal ribosomal protein uS17 family. In terms of assembly, part of the 30S ribosomal subunit.

Functionally, one of the primary rRNA binding proteins, it binds specifically to the 5'-end of 16S ribosomal RNA. The polypeptide is Small ribosomal subunit protein uS17 (Methanocella arvoryzae (strain DSM 22066 / NBRC 105507 / MRE50)).